A 198-amino-acid chain; its full sequence is Chromophore lyase CpcS/CpeS 2 (198 aa).

This sequence belongs to the CpcS/CpeS biliprotein lyase family.

It localises to the plastid. The protein resides in the organellar chromatophore. Its function is as follows. Covalently attaches a chromophore to Cys residue(s) of phycobiliproteins. This is Chromophore lyase CpcS/CpeS 2 from Paulinella chromatophora.